A 437-amino-acid polypeptide reads, in one-letter code: 3-ketoacyl-CoA thiolase (437 aa).

The Acyl-thioester intermediate role is filled by C99. Residues H392 and C422 each act as proton acceptor in the active site.

Belongs to the thiolase-like superfamily. Thiolase family. Heterotetramer of two alpha chains (FadJ) and two beta chains (FadI).

It is found in the cytoplasm. The enzyme catalyses an acyl-CoA + acetyl-CoA = a 3-oxoacyl-CoA + CoA. Its pathway is lipid metabolism; fatty acid beta-oxidation. Its function is as follows. Catalyzes the final step of fatty acid oxidation in which acetyl-CoA is released and the CoA ester of a fatty acid two carbons shorter is formed. The polypeptide is 3-ketoacyl-CoA thiolase (Erwinia tasmaniensis (strain DSM 17950 / CFBP 7177 / CIP 109463 / NCPPB 4357 / Et1/99)).